The chain runs to 440 residues: Protein CapE (440 aa).

The next 12 helical transmembrane spans lie at 7–27 (VILI…IGYL), 31–51 (IGFR…VYLL), 60–80 (LVYL…NIFL), 102–122 (FSIA…ISVF), 141–161 (FYYT…FYII), 179–199 (ELPM…FAFS), 204–224 (THIK…LITG), 249–269 (WWMI…IKVF), 324–344 (IFSY…GYGF), 360–380 (YYNG…LLLW), 382–402 (FTNF…SVLI), and 409–429 (FSFV…LLFI).

The protein resides in the cell membrane. It participates in capsule biogenesis; capsule polysaccharide biosynthesis. Required for the biosynthesis of type 1 capsular polysaccharide. The chain is Protein CapE (capE) from Staphylococcus aureus.